Reading from the N-terminus, the 414-residue chain is 2,3-diketo-5-methylthiopentyl-1-phosphate enolase (414 aa).

K99 serves as the catalytic Proton acceptor. Residues K148, 174 to 177, H265, G338, and 360 to 361 contribute to the substrate site; these read KDDE and GG. Mg(2+) contacts are provided by K174, D176, and E177. K174 is subject to N6-carboxylysine.

It belongs to the RuBisCO large chain family. Type IV subfamily. As to quaternary structure, homodimer. Mg(2+) is required as a cofactor.

The catalysed reaction is 5-methylsulfanyl-2,3-dioxopentyl phosphate = 2-hydroxy-5-methylsulfanyl-3-oxopent-1-enyl phosphate. It participates in amino-acid biosynthesis; L-methionine biosynthesis via salvage pathway; L-methionine from S-methyl-5-thio-alpha-D-ribose 1-phosphate: step 3/6. Functionally, catalyzes the enolization of 2,3-diketo-5-methylthiopentyl-1-phosphate (DK-MTP-1-P) into 2-hydroxy-3-keto-5-methylthiopentenyl-1-phosphate (HK-MTPenyl-1-P). The protein is 2,3-diketo-5-methylthiopentyl-1-phosphate enolase of Bacillus cereus (strain G9842).